A 137-amino-acid polypeptide reads, in one-letter code: Peptide methionine sulfoxide reductase MsrB (137 aa).

The 123-residue stretch at 7-129 (PEELKNGLSE…NSASLSFTDE (123 aa)) folds into the MsrB domain. Residues C46, C49, C95, and C98 each contribute to the Zn(2+) site. The active-site Nucleophile is C118.

The protein belongs to the MsrB Met sulfoxide reductase family. Requires Zn(2+) as cofactor.

The catalysed reaction is L-methionyl-[protein] + [thioredoxin]-disulfide + H2O = L-methionyl-(R)-S-oxide-[protein] + [thioredoxin]-dithiol. The sequence is that of Peptide methionine sulfoxide reductase MsrB from Klebsiella pneumoniae subsp. pneumoniae (strain ATCC 700721 / MGH 78578).